The following is a 344-amino-acid chain: N-acetyl-gamma-glutamyl-phosphate reductase (344 aa).

C150 is an active-site residue.

This sequence belongs to the NAGSA dehydrogenase family. Type 1 subfamily.

It localises to the cytoplasm. It carries out the reaction N-acetyl-L-glutamate 5-semialdehyde + phosphate + NADP(+) = N-acetyl-L-glutamyl 5-phosphate + NADPH + H(+). The protein operates within amino-acid biosynthesis; L-arginine biosynthesis; N(2)-acetyl-L-ornithine from L-glutamate: step 3/4. Functionally, catalyzes the NADPH-dependent reduction of N-acetyl-5-glutamyl phosphate to yield N-acetyl-L-glutamate 5-semialdehyde. This chain is N-acetyl-gamma-glutamyl-phosphate reductase, found in Pseudomonas putida (strain ATCC 700007 / DSM 6899 / JCM 31910 / BCRC 17059 / LMG 24140 / F1).